Here is a 415-residue protein sequence, read N- to C-terminus: Histidine--tRNA ligase (415 aa).

Belongs to the class-II aminoacyl-tRNA synthetase family. As to quaternary structure, homodimer.

It localises to the cytoplasm. It catalyses the reaction tRNA(His) + L-histidine + ATP = L-histidyl-tRNA(His) + AMP + diphosphate + H(+). This is Histidine--tRNA ligase from Gluconacetobacter diazotrophicus (strain ATCC 49037 / DSM 5601 / CCUG 37298 / CIP 103539 / LMG 7603 / PAl5).